Here is a 433-residue protein sequence, read N- to C-terminus: Trigger factor (433 aa).

Residues 163 to 248 form the PPIase FKBP-type domain; sequence GDTVNIDFSG…VNEIKFKDVP (86 aa).

The protein belongs to the FKBP-type PPIase family. Tig subfamily.

Its subcellular location is the cytoplasm. It carries out the reaction [protein]-peptidylproline (omega=180) = [protein]-peptidylproline (omega=0). Involved in protein export. Acts as a chaperone by maintaining the newly synthesized protein in an open conformation. Functions as a peptidyl-prolyl cis-trans isomerase. The chain is Trigger factor from Staphylococcus epidermidis (strain ATCC 35984 / DSM 28319 / BCRC 17069 / CCUG 31568 / BM 3577 / RP62A).